Here is a 290-residue protein sequence, read N- to C-terminus: Ribosomal RNA small subunit methyltransferase A (290 aa).

S-adenosyl-L-methionine is bound by residues Asn-27, Leu-29, Gly-54, Glu-75, Asp-100, and Asn-125.

This sequence belongs to the class I-like SAM-binding methyltransferase superfamily. rRNA adenine N(6)-methyltransferase family. RsmA subfamily.

Its subcellular location is the cytoplasm. The catalysed reaction is adenosine(1518)/adenosine(1519) in 16S rRNA + 4 S-adenosyl-L-methionine = N(6)-dimethyladenosine(1518)/N(6)-dimethyladenosine(1519) in 16S rRNA + 4 S-adenosyl-L-homocysteine + 4 H(+). Specifically dimethylates two adjacent adenosines (A1518 and A1519) in the loop of a conserved hairpin near the 3'-end of 16S rRNA in the 30S particle. May play a critical role in biogenesis of 30S subunits. The chain is Ribosomal RNA small subunit methyltransferase A from Streptococcus pyogenes serotype M1.